Here is a 689-residue protein sequence, read N- to C-terminus: DNA ligase (689 aa).

NAD(+)-binding positions include 58-62 (DQEYD), 107-108 (SL), and Glu-138. The active-site N6-AMP-lysine intermediate is Lys-140. NAD(+) contacts are provided by Arg-161, Glu-198, Lys-314, and Lys-338. Zn(2+) is bound by residues Cys-432, Cys-435, Cys-448, and Cys-453. Positions 611 to 689 (ASSGTLSGKT…QELLEMLHGG (79 aa)) constitute a BRCT domain.

This sequence belongs to the NAD-dependent DNA ligase family. LigA subfamily. Requires Mg(2+) as cofactor. It depends on Mn(2+) as a cofactor.

It catalyses the reaction NAD(+) + (deoxyribonucleotide)n-3'-hydroxyl + 5'-phospho-(deoxyribonucleotide)m = (deoxyribonucleotide)n+m + AMP + beta-nicotinamide D-nucleotide.. Functionally, DNA ligase that catalyzes the formation of phosphodiester linkages between 5'-phosphoryl and 3'-hydroxyl groups in double-stranded DNA using NAD as a coenzyme and as the energy source for the reaction. It is essential for DNA replication and repair of damaged DNA. The protein is DNA ligase of Methylacidiphilum infernorum (isolate V4) (Methylokorus infernorum (strain V4)).